The sequence spans 193 residues: Protein TEX261 (193 aa).

Transmembrane regions (helical) follow at residues Met-1–Ala-21, Ser-39–Phe-59, Ile-67–Ile-87, Phe-94–Glu-114, and Val-122–Ser-142.

It belongs to the SVP26 family.

It is found in the membrane. This Bos taurus (Bovine) protein is Protein TEX261 (TEX261).